A 1338-amino-acid chain; its full sequence is Thioester-containing protein 1 allele S3 (1338 aa).

The signal sequence occupies residues 1 to 21; that stretch reads MWQFIRSRILTVIIFIGAAHG. N-linked (GlcNAc...) asparagine glycosylation is found at Asn68, Asn199, Asn242, Asn312, and Asn481. The tract at residues 580 to 609 is may contain the cleavage site; that stretch reads ENEFDIFHSLGLFARTLDDILFDSANEKTG. Residues Asn637, Asn728, Asn813, and Asn828 are each glycosylated (N-linked (GlcNAc...) asparagine). A cross-link (isoglutamyl cysteine thioester (Cys-Gln)) is located at residues 859-862; the sequence is CGEQ. Intrachain disulfides connect Cys1217-Cys1283, Cys1326-Cys1338, and Cys1329-Cys1334.

In terms of assembly, heterodimer of a TEP1-N chain and an TEP1-C chain non-covalently linked. Forms a complex composed of TEP1-N and TEP1-C heterodimer, LRIM1 and APL1C; the interaction stabilizes TEP1-N and TEP1-C heterodimer, prevents its binding to tissues while circulating in the hemolymph and protects the thioester bond from hydrolysis. Mature TEP1 and to a lesser extent full-length TEP1 interact with SPCLIP1; the interaction is induced by microbial infection. Post-translationally, in the hemolymph, the full-length protein is cleaved by an unknow protease into a 75kDa N-terminal (TEP1-N) chain and an 80kDa C-terminal (TEP1-C) chain which remain non-covalently linked. The TEP1-C chain contains the thioester bond which covalently binds to the pathogen surface. Cleavage is induced by bacterial infection or aseptic wound injury. During embryonic and pupal development, the cleaved form is the predominant form. In terms of processing, N-glycosylated.

It localises to the secreted. Functionally, plays an essential role in the innate immune response against bacteria, fungi and protozoa infection. After proteolytic cleavage, the protein C-terminus binds covalently through a thioester bond to the pathogen surface resulting in pathogen clearance either by melanization or lysis. Initiate the recruitment and activation of a cascade of proteases, mostly of CLIP-domain serine proteases, which leads to the proteolytic cleavage of the prophenoloxidase (PPO) into active phenoloxidase (PO), the rate-limiting enzyme in melanin biosynthesis. In response to parasite P.berghei-mediated infection, binds to and mediates killing of ookinetes, as they egress from midgut epithelial cells into the basal labyrinth, by both lysis and melanization. During bacterial infection, binds to both Gram-positive and Gram-negative bacteria but only promotes phagocytosis of Gram-negative bacteria. Promotes the accumulation of SPCLIP1 onto the surface of P.berghei ookinetes and bacterium E.coli which leads to the melanization of the pathogen. Recruits CLIPA2 to bacteria surface. In response to bacterial infection, required for periostial hemocyte aggregation, but not for the aggregation of sessile hemocytes in non-periostial regions. During the late stage of fungus B.bassiana-mediated infection, required for the initiation of hyphae melanization by binding to the surface of hyphae and recruiting prophenoloxidase PPO to them. Plays a role in male fertility by binding to defective sperm cells and promoting their removal during spermatogenesis. Binds to and mediates killing of parasite P.bergei ookinetes by lysis. In terms of biological role, binds covalently through a thioester bond to the pathogen surface resulting in pathogen clearance. This is Thioester-containing protein 1 allele S3 from Anopheles gambiae (African malaria mosquito).